The following is an 861-amino-acid chain: Alpha-actinin A (861 aa).

Positions 1 to 239 are actin-binding; sequence MSEEPTPVSG…VMTYVAQYYH (239 aa). Calponin-homology (CH) domains lie at 22–127 and 136–242; these read ITQK…LRFA and LSAK…HHFS. 4 Spectrin repeats span residues 240 to 365, 366 to 480, 481 to 601, and 602 to 714; these read HFSA…ALEK, AEQE…TGVK, SSAE…EERK, and VQLA…EQVV. 2 consecutive EF-hand domains span residues 729 to 764 and 765 to 800; these read EELS…IGDE and LTEE…SRKG. 10 residues coordinate Ca(2+): Asp-742, Asp-744, Asp-746, Lys-748, Glu-753, Asp-778, Asp-780, Asn-782, Thr-784, and Glu-789.

Belongs to the alpha-actinin family. Homodimer; antiparallel.

The protein resides in the cytoplasm. It localises to the cell cortex. Its subcellular location is the contractile vacuole. The protein localises to the cytoplasmic vesicle. It is found in the phagosome. In terms of biological role, F-actin cross-linking protein which is thought to anchor actin to a variety of intracellular structures. This is a bundling protein. Increases the actin-stimulated ATPase activity of myosin. Involved in vegetative cell growth, phagocytosis, motility and development, probably through stabilization of the actin network in the cortical cytoskeleton. The protein is Alpha-actinin A (abpA) of Dictyostelium discoideum (Social amoeba).